The sequence spans 286 residues: tRNA (guanine-N(7)-)-methyltransferase (286 aa).

Residues G103, 126 to 127 (EI), 161 to 162 (NA), and C181 contribute to the S-adenosyl-L-methionine site. D184 is a catalytic residue. 259–261 (TEE) is a binding site for S-adenosyl-L-methionine.

The protein belongs to the class I-like SAM-binding methyltransferase superfamily. TrmB family. As to quaternary structure, forms a complex with TRM82.

It localises to the nucleus. The enzyme catalyses guanosine(46) in tRNA + S-adenosyl-L-methionine = N(7)-methylguanosine(46) in tRNA + S-adenosyl-L-homocysteine. It functions in the pathway tRNA modification; N(7)-methylguanine-tRNA biosynthesis. Functionally, catalyzes the formation of N(7)-methylguanine at position 46 (m7G46) in tRNA. The protein is tRNA (guanine-N(7)-)-methyltransferase of Vanderwaltozyma polyspora (strain ATCC 22028 / DSM 70294 / BCRC 21397 / CBS 2163 / NBRC 10782 / NRRL Y-8283 / UCD 57-17) (Kluyveromyces polysporus).